Reading from the N-terminus, the 493-residue chain is Activin receptor type-1C (493 aa).

The signal sequence occupies residues 1 to 25 (MTPARRSALSLALLLVALASDLAAG). The Extracellular portion of the chain corresponds to 26-113 (LKCVCLLCDS…PDAPRLGPTE (88 aa)). A helical membrane pass occupies residues 114-134 (LTVVITVPVCLLSIAAMLTIW). Residues 135 to 493 (ACQDRQCTYR…QLCVKEDCKA (359 aa)) are Cytoplasmic-facing. One can recognise a GS domain in the interval 165–194 (KTLKDLIYDATASGSGSGPPLLVQRTIART). The region spanning 195-485 (IVLQEIVGKG…LRVKKTISQL (291 aa)) is the Protein kinase domain. ATP-binding positions include 201 to 209 (VGKGRFGEV) and K222. D323 functions as the Proton acceptor in the catalytic mechanism.

The protein belongs to the protein kinase superfamily. TKL Ser/Thr protein kinase family. TGFB receptor subfamily. Binds the type 2 receptor protein ACVR2A. Mg(2+) is required as a cofactor. Mn(2+) serves as cofactor. Expressed in brain, kidney, lung, liver, testis, ovary, adrenal gland, heart, prostate, gastrointestinal tract, and spleen. Distributed throughout both adult and embryonic central nervous system and pancreatic islet cells.

It localises to the membrane. The catalysed reaction is L-threonyl-[receptor-protein] + ATP = O-phospho-L-threonyl-[receptor-protein] + ADP + H(+). It carries out the reaction L-seryl-[receptor-protein] + ATP = O-phospho-L-seryl-[receptor-protein] + ADP + H(+). Functionally, serine/threonine protein kinase which forms a receptor complex on ligand binding. The receptor complex consists of 2 type II and 2 type I transmembrane serine/threonine kinases. Type II receptors phosphorylate and activate type I receptors which autophosphorylate, then bind and activate SMAD transcriptional regulators, SMAD2 and SMAD3. Receptor for activin AB, activin B, activin E and NODAL. Upon NODAL binding, activation results in increased apoptosis and reduced proliferation through suppression of AKT signaling and the activation of Smad2-dependent signaling pathway in pancreatic beta-cells, trophoblasts, epithelial or neuronal cells. Acts as a positive regulator for macrophage activation partially through down-regulation of PPARG expression. This is Activin receptor type-1C from Rattus norvegicus (Rat).